The primary structure comprises 409 residues: MDRISGLPDEVLVKILSFVPTKVAVSTSILSKRWEFLWMWLTKLKFGSKRYSESEFKRLQCFLDRNLPLHRAPVIESFRLVLSDSHFKPEDIRMWVVVAVSRYIRELKIYSSHYGEKQNILPSSLYTCKSLVILKLDGGVLLDVPRMVCLPSLKTLELKGVRYFKQGSLQRLLCNCPVLEDLVVNLSHHDNMGKLTVIVPSLQRLSLSTPSSREFVIDTPSLLSFQLVDRNDNSHTFLIENMPKLREAYINVPFADIKSLIGSITSVKRLAISSEVGYGEGFIFNHLEELTLWNKYSSNLLVWFLKNSPNLRELMLVSETDDHENLGMLSWNQPSIVPECMLSSLQKFTWFKYLGRPQDRDIAVYILKNACRLRTATIKSDTRLFTKLEMITELRLSSQASSTCELNFS.

One can recognise an F-box domain in the interval 1–47; sequence MDRISGLPDEVLVKILSFVPTKVAVSTSILSKRWEFLWMWLTKLKFG. The region spanning 330–379 is the FBD domain; it reads SWNQPSIVPECMLSSLQKFTWFKYLGRPQDRDIAVYILKNACRLRTATIK.

The protein is FBD-associated F-box protein At4g10400 of Arabidopsis thaliana (Mouse-ear cress).